The sequence spans 150 residues: Lipoprotein signal peptidase (150 aa).

The next 3 helical transmembrane spans lie at 5–25 (LSLV…NWIV), 59–79 (QQWF…WFLW), and 83–103 (AQNW…GNFI). Catalysis depends on residues aspartate 113 and aspartate 129. The helical transmembrane segment at 124–144 (IFNIADILLSVGFVLLFIAIL) threads the bilayer.

Belongs to the peptidase A8 family.

It is found in the cell membrane. The enzyme catalyses Release of signal peptides from bacterial membrane prolipoproteins. Hydrolyzes -Xaa-Yaa-Zaa-|-(S,diacylglyceryl)Cys-, in which Xaa is hydrophobic (preferably Leu), and Yaa (Ala or Ser) and Zaa (Gly or Ala) have small, neutral side chains.. Its pathway is protein modification; lipoprotein biosynthesis (signal peptide cleavage). Functionally, this protein specifically catalyzes the removal of signal peptides from prolipoproteins. The polypeptide is Lipoprotein signal peptidase (Lactococcus lactis subsp. lactis (strain IL1403) (Streptococcus lactis)).